Here is a 406-residue protein sequence, read N- to C-terminus: Odorant receptor 42a (406 aa).

The Cytoplasmic segment spans residues 1–44 (MDLRRWFPTLYTQSKDSPVRSRDATLYLLRCVFLMGVRKPPAKF). The chain crosses the membrane as a helical span at residues 45-65 (FVAYVLWSFALNFCSTFYQPI). Residues 66 to 86 (GFLTGYISHLSEFSPGEFLTS) are Extracellular-facing. A helical transmembrane segment spans residues 87 to 107 (LQVAFNAWSCSTKVLIVWALV). Over 108–142 (KRFDEANNLLDEMDRRITDPGERLQIHRAVSLSNR) the chain is Cytoplasmic. The chain crosses the membrane as a helical span at residues 143–163 (IFFFFMAVYMVYATNTFLSAI). The Extracellular segment spans residues 164–181 (FIGRPPYQNYYPFLDWRS). A helical membrane pass occupies residues 182-202 (STLHLALQAGLEYFAMAGACF). Residues 203 to 271 (QDVCVDCYPV…DCLRPVISGT (69 aa)) are Cytoplasmic-facing. The helical transmembrane segment at 272-292 (IFVQFLVVGLVLGFTLINIVL) threads the bilayer. The Extracellular portion of the chain corresponds to 293–298 (FANLGS). A helical membrane pass occupies residues 299–319 (AIAALSFMAAVLLETTPFCIL). The Cytoplasmic segment spans residues 320 to 359 (CNYLTEDCYKLADALFQSNWIDEEKRYQKTLMYFLQKLQQ). The chain crosses the membrane as a helical span at residues 360-380 (PITFMAMNVFPISVGTNISVT). At 381 to 406 (KFSFSVFTLVKQMNISEKLAKSEMEE) the chain is on the extracellular side. The N-linked (GlcNAc...) asparagine glycan is linked to asparagine 394.

The protein belongs to the insect chemoreceptor superfamily. Heteromeric odorant receptor channel (TC 1.A.69) family. Or2a subfamily. In terms of assembly, interacts with Orco. Complexes exist early in the endomembrane system in olfactory sensory neurons (OSNs), coupling these complexes to the conserved ciliary trafficking pathway.

The protein localises to the cell membrane. Functionally, odorant receptor which mediates acceptance or avoidance behavior, depending on its substrates. The odorant receptor repertoire encodes a large collection of odor stimuli that vary widely in identity, intensity, and duration. May form a complex with Orco to form odorant-sensing units, providing sensitive and prolonged odorant signaling and calcium permeability. Involved in the behavioral responses to butanol, ethyl acetate, propyl acetate, and pentyl acetate. Also responds to pyrazines. The protein is Odorant receptor 42a (Or42a) of Drosophila melanogaster (Fruit fly).